The following is a 427-amino-acid chain: Sialic acid TRAP transporter large permease protein SiaM (427 aa).

The next 12 helical transmembrane spans lie at 11–31, 52–72, 82–102, 140–160, 165–185, 214–234, 246–266, 270–290, 301–321, 322–342, 348–368, and 394–414; these read LLFAGMPVGFSLIFVALAFLI, FTLLAVPFFVLTGHLMNSAGI, SLVGHITGSLGHVNIMASLLF, ASCIIGPLVPPSVPLVIYGVV, IGALFLAGAIPGLLCCIALMV, AFLSLLTPVIIIGGIFSGKFT, ALFLGTVVYNTLTLQGFIEIL, VNTTAVVALMVMGVTVFGWIV, DYFLTISDNPLVLLLLINLLL, LFLGTFIESLALLLLLVPFLV, VGIDPVHFGVMAILNLMIGIL, and VLPLLVPLFIVLALVAVFPQF.

It belongs to the TRAP transporter large permease family. In terms of assembly, the complex comprises the extracytoplasmic solute receptor protein SiaP, and the two transmembrane proteins SiaQ and SiaM. SiaQ and SiaM form a tight 1:1 complex.

It localises to the cell inner membrane. In terms of biological role, part of the tripartite ATP-independent periplasmic (TRAP) transport system SiaPQM that catalyzes unidirectional Na(+)-dependent sialic acid uptake. This is Sialic acid TRAP transporter large permease protein SiaM from Vibrio cholerae serotype O1 (strain ATCC 39315 / El Tor Inaba N16961).